Reading from the N-terminus, the 421-residue chain is FBD-associated F-box protein At5g56370 (421 aa).

Positions 1–52 (MDSISLLPDDFLLRILSLLPTKDVLNTSVLSKRWRYLWKLVPKLQYSLIDKN) constitute an F-box domain. Residues 332–382 (HWEEPSSVPETLMFVLETLEWRNYRGLKMENELASFLLKHSRRLKIATFSP) enclose the FBD domain.

In Arabidopsis thaliana (Mouse-ear cress), this protein is FBD-associated F-box protein At5g56370.